A 409-amino-acid chain; its full sequence is Shaggy-related protein kinase NtK-1 (409 aa).

Residues Met1 to Glu27 form a disordered region. The 285-residue stretch at Tyr73 to Phe357 folds into the Protein kinase domain. Residues Val79 to Val87 and Lys102 each bind ATP. Residue Asp198 is the Proton acceptor of the active site.

It belongs to the protein kinase superfamily. CMGC Ser/Thr protein kinase family. GSK-3 subfamily. In terms of processing, autophosphorylated mainly on threonine and serine residues.

The enzyme catalyses L-seryl-[protein] + ATP = O-phospho-L-seryl-[protein] + ADP + H(+). It carries out the reaction L-threonyl-[protein] + ATP = O-phospho-L-threonyl-[protein] + ADP + H(+). May mediate extracellular signals to regulate transcription in differentiating cells. The polypeptide is Shaggy-related protein kinase NtK-1 (NTK-1) (Nicotiana tabacum (Common tobacco)).